The following is a 248-amino-acid chain: MAEEEAGGLVFHPMDQFVIKPLFGEGPVNWYTPTNATLWMALAALAITALLVFGTRGRAIVPNRVQSIAELLYGMVHKMVEDVTGKDGLKYFPYVMTLFCFILFANFLGLLPKSFSPTSHIAVTAVLAVLVFAGVTVLGFVKNGAHFLGLFWVSSAPLALRPVLAVIELISYFVRPVSHSIRLAGNIMAGHAVIKVFAAFAAVAAIAPVSVVAITAMYGLEVLVCLIQAYVFTILTCVYLKDALHPAH.

6 helical membrane passes run threonine 34 to glycine 54, tyrosine 91 to leucine 111, isoleucine 121 to valine 141, phenylalanine 147 to isoleucine 167, valine 196 to alanine 216, and leucine 220 to leucine 240.

It belongs to the ATPase A chain family. In terms of assembly, F-type ATPases have 2 components, CF(1) - the catalytic core - and CF(0) - the membrane proton channel. CF(1) has five subunits: alpha(3), beta(3), gamma(1), delta(1), epsilon(1). CF(0) has three main subunits: a(1), b(2) and c(9-12). The alpha and beta chains form an alternating ring which encloses part of the gamma chain. CF(1) is attached to CF(0) by a central stalk formed by the gamma and epsilon chains, while a peripheral stalk is formed by the delta and b chains.

The protein localises to the cell inner membrane. In terms of biological role, key component of the proton channel; it plays a direct role in the translocation of protons across the membrane. This chain is ATP synthase subunit a, found in Paracoccus denitrificans (strain Pd 1222).